A 272-amino-acid polypeptide reads, in one-letter code: Acidic leucine-rich nuclear phosphoprotein 32 family member B (272 aa).

LRR repeat units lie at residues proline 16–glutamate 40, asparagine 43–proline 64, lysine 65–alanine 84, and serine 89–lysine 110. The LRRCT domain occupies cysteine 123–glutamate 161. Residues aspartate 149–glutamate 254 are compositionally biased toward acidic residues. The interval aspartate 149–aspartate 272 is disordered. Phosphoserine occurs at positions 164 and 171. Over residues serine 255–threonine 265 the composition is skewed to basic and acidic residues. The short motif at lysine 260–arginine 263 is the Nuclear localization signal element. Residue threonine 265 is modified to Phosphothreonine.

This sequence belongs to the ANP32 family. As to quaternary structure, interacts with histones H3 and H4. Interacts with KLF5; this interaction induces promoter region-specific histone incorporation and inhibition of histone acetylation by ANP32B. In terms of processing, some glutamate residues are glycylated by TTLL8. This modification occurs exclusively on glutamate residues and results in a glycine chain on the gamma-carboxyl group. Directly cleaved by caspase-3/CASP3. Predominantly expressed in brain. Expressed in the entire embryonic brain, whereas in the adult brain its expression is restricted to the subventricular zone where there are neural progenitor cells.

The protein resides in the nucleus. Multifunctional protein that is involved in the regulation of many processes including cell proliferation, apoptosis, cell cycle progression or transcription. Regulates the proliferation of neuronal stem cells, differentiation of leukemic cells and progression from G1 to S phase of the cell cycle. As negative regulator of caspase-3-dependent apoptosis, may act as an antagonist of ANP32A in regulating tissue homeostasis. Exhibits histone chaperone properties, able to recruit histones to certain promoters, thus regulating the transcription of specific genes. Also plays an essential role in the nucleocytoplasmic transport of specific mRNAs via the uncommon nuclear mRNA export receptor XPO1/CRM1. Participates in the regulation of adequate adaptive immune responses by acting on mRNA expression and cell proliferation. In Rattus norvegicus (Rat), this protein is Acidic leucine-rich nuclear phosphoprotein 32 family member B (Anp32b).